Reading from the N-terminus, the 148-residue chain is Deoxyuridine 5'-triphosphate nucleotidohydrolase (148 aa).

Residues arginine 67–glycine 69, asparagine 80, leucine 84–aspartate 86, and methionine 94 contribute to the substrate site.

Belongs to the dUTPase family. Mg(2+) serves as cofactor.

The enzyme catalyses dUTP + H2O = dUMP + diphosphate + H(+). It participates in pyrimidine metabolism; dUMP biosynthesis; dUMP from dCTP (dUTP route): step 2/2. Its function is as follows. This enzyme is involved in nucleotide metabolism: it produces dUMP, the immediate precursor of thymidine nucleotides and it decreases the intracellular concentration of dUTP so that uracil cannot be incorporated into DNA. This is Deoxyuridine 5'-triphosphate nucleotidohydrolase from Ralstonia nicotianae (strain ATCC BAA-1114 / GMI1000) (Ralstonia solanacearum).